A 63-amino-acid chain; its full sequence is Transmembrane protein 033R (63 aa).

This chain is Transmembrane protein 033R, found in Dryophytes versicolor (chameleon treefrog).